A 488-amino-acid polypeptide reads, in one-letter code: Prostaglandin E2 receptor EP4 subtype (488 aa).

Topologically, residues 1 to 19 (MSIPGVNASFSSTPERLNS) are extracellular. N-linked (GlcNAc...) asparagine glycosylation is present at Asn7. The chain crosses the membrane as a helical span at residues 20 to 43 (PVTIPAVMFIFGVVGNLVAIVVLC). Residues 44 to 55 (KSRKEQKETTFY) lie on the Cytoplasmic side of the membrane. Residues 56–79 (TLVCGLAVTDLLGTLLVSPVTIAT) traverse the membrane as a helical segment. Over 80-96 (YMKGQWPGDQALCDYST) the chain is Extracellular. Cysteines 92 and 170 form a disulfide. The helical transmembrane segment at 97 to 115 (FILLFFGLSGLSIICAMSI) threads the bilayer. Over 116–135 (ERYLAINHAYFYSHYVDKRL) the chain is Cytoplasmic. The chain crosses the membrane as a helical span at residues 136-160 (AGLTLFAVYASNVLFCALPNMGLGR). The Extracellular segment spans residues 161–184 (SERQYPGTWCFIDWTTNVTAYAAF). The chain crosses the membrane as a helical span at residues 185–211 (SYMYAGFSSFLILATVLCNVLVCGALL). The Cytoplasmic portion of the chain corresponds to 212–270 (RMLRQFMRRTSLGTEQHHAAAAAAVASVACRGHAAASPALQRLSDFRRRRSFRRIAGAE). A helical transmembrane segment spans residues 271–298 (IQMVILLIATSLVVLICSIPLVVRVFIN). At 299-315 (QLYQPSVVKDISRNPDL) the chain is on the extracellular side. A helical membrane pass occupies residues 316-335 (QAIRIASVNPILDPWIYILL). Residues 336-488 (RKTVLSKAIE…ETLKLSEKCI (153 aa)) are Cytoplasmic-facing. Residues 358–380 (GRDGSAQHCSESRRTSSAMSGHS) are disordered. A phosphoserine mark is found at Ser377, Ser380, Ser382, and Ser385.

This sequence belongs to the G-protein coupled receptor 1 family. In terms of assembly, interacts with FEM1A. Phosphorylation mediates agonist-mediated desensitization by promoting cytoplasmic retention.

It is found in the cell membrane. In terms of biological role, receptor for prostaglandin E2 (PGE2). The activity of this receptor is mediated by G(s) proteins that stimulate adenylate cyclase. Has a relaxing effect on smooth muscle. May play an important role in regulating renal hemodynamics, intestinal epithelial transport, adrenal aldosterone secretion, and uterine function. The protein is Prostaglandin E2 receptor EP4 subtype (Ptger4) of Rattus norvegicus (Rat).